The following is a 297-amino-acid chain: tRNA pseudouridine synthase B (297 aa).

D39 (nucleophile) is an active-site residue.

Belongs to the pseudouridine synthase TruB family. Type 1 subfamily.

The catalysed reaction is uridine(55) in tRNA = pseudouridine(55) in tRNA. In terms of biological role, responsible for synthesis of pseudouridine from uracil-55 in the psi GC loop of transfer RNAs. The polypeptide is tRNA pseudouridine synthase B (Lactobacillus johnsonii (strain CNCM I-12250 / La1 / NCC 533)).